Reading from the N-terminus, the 484-residue chain is Glutamate--tRNA ligase (484 aa).

The short motif at Pro10–Gly20 is the 'HIGH' region element. The short motif at Lys252–Arg256 is the 'KMSKS' region element. ATP is bound at residue Lys255.

This sequence belongs to the class-I aminoacyl-tRNA synthetase family. Glutamate--tRNA ligase type 1 subfamily. In terms of assembly, monomer.

It is found in the cytoplasm. It carries out the reaction tRNA(Glu) + L-glutamate + ATP = L-glutamyl-tRNA(Glu) + AMP + diphosphate. In terms of biological role, catalyzes the attachment of glutamate to tRNA(Glu) in a two-step reaction: glutamate is first activated by ATP to form Glu-AMP and then transferred to the acceptor end of tRNA(Glu). This Mycoplasma genitalium (strain ATCC 33530 / DSM 19775 / NCTC 10195 / G37) (Mycoplasmoides genitalium) protein is Glutamate--tRNA ligase.